Consider the following 243-residue polypeptide: Lipid II isoglutaminyl synthase (glutamine-hydrolyzing) subunit GatD (243 aa).

A GATase cobBQ-type domain is found at 6 to 197 (IYHFMSDKLN…LHGPILPKNY (192 aa)). Cys-94 functions as the Nucleophile in the catalytic mechanism. Arg-128 contributes to the substrate binding site. His-189 is a catalytic residue.

It belongs to the CobB/CobQ family. GatD subfamily. In terms of assembly, forms a heterodimer with MurT.

The catalysed reaction is beta-D-GlcNAc-(1-&gt;4)-Mur2Ac(oyl-L-Ala-gamma-D-Glu-L-Lys-D-Ala-D-Ala)-di-trans,octa-cis-undecaprenyl diphosphate + L-glutamine + ATP + H2O = beta-D-GlcNAc-(1-&gt;4)-Mur2Ac(oyl-L-Ala-D-isoglutaminyl-L-Lys-D-Ala-D-Ala)-di-trans,octa-cis-undecaprenyl diphosphate + L-glutamate + ADP + phosphate + H(+). It carries out the reaction L-glutamine + H2O = L-glutamate + NH4(+). It functions in the pathway cell wall biogenesis; peptidoglycan biosynthesis. Functionally, the lipid II isoglutaminyl synthase complex catalyzes the formation of alpha-D-isoglutamine in the cell wall lipid II stem peptide. The GatD subunit catalyzes the hydrolysis of glutamine to glutamate and ammonia. The resulting ammonia molecule is channeled to the active site of MurT. This Staphylococcus aureus (strain N315) protein is Lipid II isoglutaminyl synthase (glutamine-hydrolyzing) subunit GatD.